Reading from the N-terminus, the 512-residue chain is NAD(P)H-quinone oxidoreductase chain 4, chloroplastic (512 aa).

Transmembrane regions (helical) follow at residues 4–24, 34–54, 87–107, 111–131, 134–154, 167–187, 210–230, 241–261, 273–293, 312–332, 333–353, 373–395, 416–436, and 462–482; these read LPWL…IPFI, WYAL…FGYH, MPLV…AWPV, AKLF…VFVS, LLLF…LLLV, FILY…TMAF, ILLY…FPLH, HYST…YALI, LIFA…AALT, MGFV…GAVL, QMIS…TTYD, TFAM…GFVA, IITF…LSML, and IFVI…PKMA.

It belongs to the complex I subunit 4 family.

The protein resides in the plastid. It localises to the chloroplast thylakoid membrane. It carries out the reaction a plastoquinone + NADH + (n+1) H(+)(in) = a plastoquinol + NAD(+) + n H(+)(out). The catalysed reaction is a plastoquinone + NADPH + (n+1) H(+)(in) = a plastoquinol + NADP(+) + n H(+)(out). The chain is NAD(P)H-quinone oxidoreductase chain 4, chloroplastic from Chlorokybus atmophyticus (Soil alga).